The following is a 363-amino-acid chain: S-adenosylmethionine:tRNA ribosyltransferase-isomerase (363 aa).

It belongs to the QueA family. In terms of assembly, monomer.

Its subcellular location is the cytoplasm. It catalyses the reaction 7-aminomethyl-7-carbaguanosine(34) in tRNA + S-adenosyl-L-methionine = epoxyqueuosine(34) in tRNA + adenine + L-methionine + 2 H(+). The protein operates within tRNA modification; tRNA-queuosine biosynthesis. In terms of biological role, transfers and isomerizes the ribose moiety from AdoMet to the 7-aminomethyl group of 7-deazaguanine (preQ1-tRNA) to give epoxyqueuosine (oQ-tRNA). This chain is S-adenosylmethionine:tRNA ribosyltransferase-isomerase, found in Brucella melitensis biotype 2 (strain ATCC 23457).